The following is an 85-amino-acid chain: Small ribosomal subunit protein bS20 (85 aa).

Belongs to the bacterial ribosomal protein bS20 family.

Binds directly to 16S ribosomal RNA. The protein is Small ribosomal subunit protein bS20 of Ruminiclostridium cellulolyticum (strain ATCC 35319 / DSM 5812 / JCM 6584 / H10) (Clostridium cellulolyticum).